We begin with the raw amino-acid sequence, 1708 residues long: MAAIGRGRSLKNLRIRGRNDSGEENVPLDLTREPSDNLREILQNVAKLQGVSNMRKLGHLNNFTKLLCDIGHSEEKLGFNYEDIIICLRLALLNEAKEVRAAGLRALRYLIQDSSILQKVLKLKVDYLIARCIDIQQSNEVERTQALRLVRKMITVNASLFPSSVANSLIAVGNDGLQERDRMVRACIAIICELALQNPEVVALRGGLNTILKNVIDCQLSRINEALITTILHLLNHPKTRQYVRADVELERILAPYTDFHYRHSPDTAEGQLKEDREARFLASKMGIIATFRSWAGIINLCKPGNSGIQSLIGVLCIPNMEIRRGLLEVLYDIFRLPLPVVTDEFIEALLSVDPGRFQDSWRLSDGFVAAEAKTILPHRARSRPDLMDNYLALILSAFIRNGLLEGLVEVITNSDDHISVRATILLGELLHMANTILPHSHSHHLHCLPTLMNMAASFDIPKEKRLRASAALNCLNRFHEMKKRGPKPYSLHLDHIIQKAIATHHKRDQYLRVQKDIFVLKDTEEALLINLRDSQVLQHKENLDWDWNLIGTILKWPNVNLRNYKDEQLHRFVRRLLYFYKPSSKLYASLDLDLAKSKQLTVVGCQFTEFLLESEEDGQGYLEDLVKDIVQWLNASSGVKPERSLQNNGLLTTLSQHYFLFIGTLSCHPHGVKMLEKCSVFQCLLNLCSLKNQDHLIKLTVSSLDYSRDGLARVILSKILTAATDACRLYATKHLRVLLRANVEFFNNWGIELLVTQLHDKNKTISSEALDILDEACEDKANLHALIQMKPALSHLGDKGLLLLLRFLSIPKGFSYLNERGYVAKQLEKWHKEYNSKYVDLIEEQLNEALTTYRKPIDGDNYVRRSNQRLQRPHVYLPVHLYGQLVHHKTGCHLLEVQSIITELCHNVRTPDLDKWEDIKKLKASLWALGNIGSSNWGLNLLQEENVIPDILKLAKQCEVLSIRGTCVYVLGLIAKTKQGCDILKCHSWDSVRHSRKHLWPVVPDDVEQLCNELSSVPSTLSLNSESTSSRHNSESESAPSSMFMLEDDRFGSTSTSTFFLDINEDAEPAFYDRPGPIKDKNSFPFFGSSKLVKNRILNSLTLPTKKHRSSSDPKGGKLSSENKTSNRRIRTLTEPSVDLNHSEDFTSSSAQKSLQLEPSFVGNKHLEDAGSTPSIGENDLKFPKSFGTETHRENTSRERLVVEGSASSHIKIRSQSFNTDTTTSGISSMSSSPSRETVAVDPTAMDTDCGSLSTVVSTKTVKTSHYLTPQSNHLSLSKSNSVSLVPPGSSHTLPRRAQSLKAPSIATIKSLADCNFSYTSSRDAFGYATLKRLQQQRMHPSLSHSEALASPAKDVLFTDTITMKANSFESRLTPSRFMKALSYASLDKEDLLSPINHNTLQRSSSVRSMVSSATYGGSDDYIGLALPVDINDIFQIKDVPYFQSKHVPPPDDRGARMFSHDGAGLSSGAGGLVKNSFHLLRQQMSLTEIMNSVHSDASLFLESTEDTGLQEHTDDNCLYCVCIELLGFQPSNQLSSICSHSDLQDIPYSDWCEQTIHNPLEVVPSKFSGISGCSDGASQEEGSASSTKSTELLLGVKTIPDDTPMCRILLRKEVLRLVVNLSSSVSTKCHETGLLTIKEKYPQTFDDICLYSEVSHLLSHCTFRLQCRRFIQELFQDVQFLQMHEEAEAVLAIPPIQPIVDESAES.

Positions 1-789 are interaction with NBN; that stretch reads MAAIGRGRSL…DKANLHALIQ (789 aa). Residues Ser21, Ser35, and Ser265 each carry the phosphoserine modification. A Glycyl lysine isopeptide (Lys-Gly) (interchain with G-Cter in ubiquitin) cross-link involves residue Lys274. Residues 521–570 are ribosome-binding domain; that stretch reads LKDTEEALLINLRDSQVLQHKENLDWDWNLIGTILKWPNVNLRNYKDEQL. ATP is bound by residues Asn543, Arg572, and Arg576. Residues 1021–1043 are compositionally biased toward low complexity; the sequence is TLSLNSESTSSRHNSESESAPSS. The interval 1021–1045 is disordered; sequence TLSLNSESTSSRHNSESESAPSSMF. N6-acetyllysine occurs at positions 1092 and 1095. Disordered regions lie at residues 1101 to 1198 and 1218 to 1247; these read SLTL…ENTS and SFNT…PTAM. Residue Thr1103 is modified to Phosphothreonine. N6-acetyllysine occurs at positions 1116, 1119, and 1125. Thr1135 bears the Phosphothreonine; by RPS6KB1 mark. Ser1138 carries the post-translational modification Phosphoserine. Polar residues predominate over residues 1147–1158; the sequence is FTSSSAQKSLQL. Phosphoserine is present on residues Ser1161, Ser1218, and Ser1234. Residues 1221–1239 are compositionally biased toward low complexity; sequence TDTTTSGISSMSSSPSRET. Thr1270 bears the Phosphothreonine mark. Phosphoserine occurs at positions 1273, 1277, 1281, and 1283. Phosphothreonine is present on Thr1294. A phosphoserine mark is found at Ser1301 and Ser1312. Thr1331 bears the Phosphothreonine mark. 2 positions are modified to phosphoserine: Ser1345 and Ser1352. Thr1375 carries the phosphothreonine modification. Residue Ser1384 is modified to Phosphoserine. Tyr1385 is subject to Phosphotyrosine. A phosphoserine mark is found at Ser1387, Ser1395, and Ser1410. The Zn(2+) site is built by His1514, Cys1519, and Cys1522. A phosphoserine mark is found at Ser1570, Ser1573, Ser1576, and Ser1591. Residue Cys1651 participates in Zn(2+) binding.

This sequence belongs to the RICTOR family. As to quaternary structure, component of the mechanistic target of rapamycin complex 2 (mTORC2), consisting in two heterotretramers composed of MTOR, MLST8, RICTOR and MAPKAP1/SIN1. The mTORC2 core complex associates with PRR5/PROTOR1 and/or PRR5L/PROTOR2. Contrary to mTORC1, mTORC2 does not bind to and is not sensitive to FKBP12-rapamycin. Binds directly to MTOR and PRR5 within the TORC2 complex; interaction with MTOR is enhanced by deubiquitination of RICTOR by USP9X. Interaction with MAPKAP1 is not enhanced by RICTOR deubiquitination by USP9X. Interacts with CCDC28B. Interacts with NBN. Interacts with SIK3. Interacts with NCKAP1L. Interacts with ARMH4 (via cytoplasmic tail); this interaction bridges ARMH4 to the mTORC2 complex and inhibits the mTORC2 kinase activity. Interacts with UBXN2A. Interacts with TSPAN8. Post-translationally, phosphorylated by MTOR; when part of mTORC2. Phosphorylated at Thr-1135 by RPS6KB1 downstream of the mTORC1 complex: phosphorylation of RICTOR inhibits mTORC2 signaling by creating a binding site for 14-3-3 proteins. Phosphorylated at Ser-1234 by GSK3B in response to endoplasmic stress, inhibiting mTORC2 signaling. In terms of processing, ubiquitinated by the SCF(FBXW7) complex, leading to its degradation by the proteasome. Deubiquitinated by USP9X; deubiquitination stabilizes RICTOR and enhances its binding to MTOR, thus promoting mTORC2 complex assembly. Acetylated by EP300/p300 in response to glucose, leading to activate the mTORC2 complex. Acetylation by BLOC1S1/GCN5L1 in response to hypotoxic stress protects RICTOR against ubiquitination and subsequent degradation by the proteasome. In terms of tissue distribution, highest levels in liver and brain with expression also detected in heart, muscle, spleen and kidney (at protein level).

The protein resides in the cell membrane. It is found in the endoplasmic reticulum membrane. The protein localises to the lysosome membrane. In terms of biological role, component of the mechanistic target of rapamycin complex 2 (mTORC2), which transduces signals from growth factors to pathways involved in proliferation, cytoskeletal organization, lipogenesis and anabolic output. In response to growth factors, mTORC2 phosphorylates and activates AGC protein kinase family members, including AKT (AKT1, AKT2 and AKT3), PKC (PRKCA, PRKCB and PRKCE) and SGK1. In contrast to mTORC1, mTORC2 is nutrient-insensitive. Within the mTORC2 complex, RICTOR probably acts as a molecular adapter. RICTOR is responsible for the FKBP12-rapamycin-insensitivity of mTORC2. mTORC2 plays a critical role in AKT1 activation by mediating phosphorylation of different sites depending on the context, such as 'Thr-450', 'Ser-473', 'Ser-477' or 'Thr-479', facilitating the phosphorylation of the activation loop of AKT1 on 'Thr-308' by PDPK1/PDK1 which is a prerequisite for full activation. mTORC2 catalyzes the phosphorylation of SGK1 at 'Ser-422' and of PRKCA on 'Ser-657'. The mTORC2 complex also phosphorylates various proteins involved in insulin signaling, such as FBXW8 and IGF2BP1. mTORC2 acts upstream of Rho GTPases to regulate the actin cytoskeleton, probably by activating one or more Rho-type guanine nucleotide exchange factors. mTORC2 promotes the serum-induced formation of stress-fibers or F-actin. Plays an essential role in embryonic growth and development. This Mus musculus (Mouse) protein is Rapamycin-insensitive companion of mTOR.